A 649-amino-acid chain; its full sequence is Transmembrane and coiled-coil domains protein 1 (649 aa).

Met1 carries the N-acetylmethionine modification. Disordered stretches follow at residues 1–37 (MEPS…LSKM), 58–83 (HQRR…EVDL), 110–166 (RVPP…PTSS), and 197–222 (LAQT…GIPD). Residues 1–587 (MEPSGSEQLY…ARNLLGKLIN (587 aa)) are Cytoplasmic-facing. Basic and acidic residues predominate over residues 20–34 (QDAEARRQTESEQKL). Polar residues predominate over residues 64–75 (SVSPHDVQQIQT). A compositionally biased stretch (basic residues) spans 113–125 (PKMKRGTSLHSRR). Low complexity predominate over residues 156–166 (SSSTTDAPTSS). Positions 197-214 (LAQTSSAVASSTDGSIHT) are enriched in polar residues. Residues 224–310 (QRTKAAIAHL…KLREVEQNGI (87 aa)) adopt a coiled-coil conformation. A phosphoserine mark is found at Ser378 and Ser410. Positions 411–433 (PKYGSEEDCSSATSGSVGANSTT) are disordered. Over residues 420–433 (SSATSGSVGANSTT) the composition is skewed to polar residues. The stretch at 457 to 566 (ALLHEVQEIR…KMELQQQQQQ (110 aa)) forms a coiled coil. 2 consecutive transmembrane segments (helical) span residues 588 to 608 (ILLA…NCVV) and 621 to 641 (LFLV…FSYV). Topologically, residues 642 to 649 (DRLFSPPR) are cytoplasmic.

The protein belongs to the TEX28 family. As to quaternary structure, may form homodimers and heterodimers with TMCC2 or TMCC3 via the coiled-coil domains. Interacts with ribosomal proteins RPL4 and RPS6.

It localises to the endoplasmic reticulum membrane. Functionally, endoplasmic reticulum membrane protein that promotes endoplasmic reticulum-associated endosome fission. Localizes to contact sites between the endoplasmic reticulum and endosomes and acts by promoting recruitment of the endoplasmic reticulum to endosome tubules for fission. Endosome membrane fission of early and late endosomes is essential to separate regions destined for lysosomal degradation from carriers to be recycled to the plasma membrane. The polypeptide is Transmembrane and coiled-coil domains protein 1 (Tmcc1) (Mus musculus (Mouse)).